The primary structure comprises 455 residues: tRNA-2-methylthio-N(6)-dimethylallyladenosine synthase (455 aa).

An MTTase N-terminal domain is found at 18–136 (KLFFIQTYGC…FPEYLNRVKT (119 aa)). Residues Cys27, Cys63, Cys97, Cys173, Cys177, and Cys180 each coordinate [4Fe-4S] cluster. In terms of domain architecture, Radical SAM core spans 159 to 389 (RKSDIKGFVT…VEIVNTGIAK (231 aa)). Residues 392–455 (KDAEGKIYEV…SFSLIGEVEK (64 aa)) enclose the TRAM domain.

It belongs to the methylthiotransferase family. MiaB subfamily. As to quaternary structure, monomer. [4Fe-4S] cluster serves as cofactor.

Its subcellular location is the cytoplasm. The enzyme catalyses N(6)-dimethylallyladenosine(37) in tRNA + (sulfur carrier)-SH + AH2 + 2 S-adenosyl-L-methionine = 2-methylsulfanyl-N(6)-dimethylallyladenosine(37) in tRNA + (sulfur carrier)-H + 5'-deoxyadenosine + L-methionine + A + S-adenosyl-L-homocysteine + 2 H(+). Its function is as follows. Catalyzes the methylthiolation of N6-(dimethylallyl)adenosine (i(6)A), leading to the formation of 2-methylthio-N6-(dimethylallyl)adenosine (ms(2)i(6)A) at position 37 in tRNAs that read codons beginning with uridine. This Clostridium beijerinckii (strain ATCC 51743 / NCIMB 8052) (Clostridium acetobutylicum) protein is tRNA-2-methylthio-N(6)-dimethylallyladenosine synthase.